We begin with the raw amino-acid sequence, 917 residues long: Protein translocase subunit SecA (917 aa).

Residues Gln-87, 105-109, and Asp-516 contribute to the ATP site; that span reads GEGKT. Cys-901, Cys-903, Cys-912, and His-913 together coordinate Zn(2+).

It belongs to the SecA family. Monomer and homodimer. Part of the essential Sec protein translocation apparatus which comprises SecA, SecYEG and auxiliary proteins SecDF-YajC and YidC. Zn(2+) is required as a cofactor.

The protein resides in the cell inner membrane. It localises to the cytoplasm. The catalysed reaction is ATP + H2O + cellular proteinSide 1 = ADP + phosphate + cellular proteinSide 2.. Part of the Sec protein translocase complex. Interacts with the SecYEG preprotein conducting channel. Has a central role in coupling the hydrolysis of ATP to the transfer of proteins into and across the cell membrane, serving both as a receptor for the preprotein-SecB complex and as an ATP-driven molecular motor driving the stepwise translocation of polypeptide chains across the membrane. The sequence is that of Protein translocase subunit SecA from Acidovorax ebreus (strain TPSY) (Diaphorobacter sp. (strain TPSY)).